The primary structure comprises 269 residues: Tryptophan synthase alpha chain (269 aa).

Active-site proton acceptor residues include E49 and D60.

Belongs to the TrpA family. In terms of assembly, tetramer of two alpha and two beta chains.

It catalyses the reaction (1S,2R)-1-C-(indol-3-yl)glycerol 3-phosphate + L-serine = D-glyceraldehyde 3-phosphate + L-tryptophan + H2O. Its pathway is amino-acid biosynthesis; L-tryptophan biosynthesis; L-tryptophan from chorismate: step 5/5. The alpha subunit is responsible for the aldol cleavage of indoleglycerol phosphate to indole and glyceraldehyde 3-phosphate. This Actinobacillus pleuropneumoniae serotype 3 (strain JL03) protein is Tryptophan synthase alpha chain.